A 576-amino-acid polypeptide reads, in one-letter code: CTP synthase (576 aa).

In terms of domain architecture, Glutamine amidotransferase type-1 spans 305 to 559 (QIALVGKYTH…LGLVAAAANI (255 aa)). Active-site for GATase activity residues include Cys-404, His-535, and Glu-537.

This sequence belongs to the CTP synthase family.

It catalyses the reaction UTP + L-glutamine + ATP + H2O = CTP + L-glutamate + ADP + phosphate + 2 H(+). The protein operates within pyrimidine metabolism; CTP biosynthesis via de novo pathway; CTP from UDP: step 2/2. Its function is as follows. Catalyzes the ATP-dependent amination of UTP to CTP with either L-glutamine or ammonia as the source of nitrogen. This is CTP synthase (URA7) from Eremothecium gossypii (strain ATCC 10895 / CBS 109.51 / FGSC 9923 / NRRL Y-1056) (Yeast).